The sequence spans 570 residues: Putative diflavin flavoprotein A 5 (570 aa).

A zinc metallo-hydrolase region spans residues Glu38–His231. The Flavodoxin-like domain occupies Val260–Lys402. The tract at residues Val421–Tyr570 is flavodoxin-reductase-like.

In the N-terminal section; belongs to the zinc metallo-hydrolase group 3 family. It in the C-terminal section; belongs to the flavodoxin reductase family. Requires Fe cation as cofactor.

Its function is as follows. Mediates electron transfer from NADH to oxygen, reducing it to water. This modular protein has 3 redox cofactors, in other organisms the same activity requires 2 or 3 proteins. The sequence is that of Putative diflavin flavoprotein A 5 (dfa5) from Nostoc sp. (strain PCC 7120 / SAG 25.82 / UTEX 2576).